Reading from the N-terminus, the 738-residue chain is DNA topoisomerase 4 subunit A (738 aa).

The Topo IIA-type catalytic domain maps to 32-496 (LPDVRDGLKP…SFEEVDLTNQ (465 aa)). Tyrosine 120 functions as the O-(5'-phospho-DNA)-tyrosine intermediate in the catalytic mechanism.

Belongs to the type II topoisomerase GyrA/ParC subunit family. ParC type 1 subfamily. As to quaternary structure, heterotetramer composed of ParC and ParE.

The protein resides in the cell membrane. It catalyses the reaction ATP-dependent breakage, passage and rejoining of double-stranded DNA.. Topoisomerase IV is essential for chromosome segregation. It relaxes supercoiled DNA. Performs the decatenation events required during the replication of a circular DNA molecule. The protein is DNA topoisomerase 4 subunit A of Rickettsia prowazekii (strain Madrid E).